Reading from the N-terminus, the 495-residue chain is Syntaphilin (495 aa).

The disordered stretch occupies residues 1–74 (MAMSLQGSRR…HGIKPPTPEQ (74 aa)). Residues 7–49 (GSRRASAGSRRRTSPPVSVRDAYGTSSLSSSSNSGSCKGSDSS) show a composition bias toward low complexity. Residues 79–161 (LQQKEVCIRH…VKNNLIDKDK (83 aa)) adopt a coiled-coil conformation. A disordered region spans residues 191–244 (VAKEEGTGESAGGSPARSLTRSSTYTKLSDPAVCGDRQPGDPSNTSAEDGADSG). Residues S200 and S204 each carry the phosphoserine modification. The span at 207 to 217 (RSLTRSSTYTK) shows a compositional bias: polar residues. A Phosphothreonine modification is found at T214. Residue S219 is modified to Phosphoserine. T235 carries the post-translational modification Phosphothreonine. A helical membrane pass occupies residues 427–446 (YIVDLLAVVVPAVPTVAWLC).

As to quaternary structure, binds to STX1A. Interacts with DNM1; this interaction inhibits the binding of DNM1 to AMPH and DNM1-receptor-mediated endocytosis.

It is found in the membrane. The protein localises to the synapse. The protein resides in the synaptosome. Functionally, inhibits SNARE complex formation by absorbing free STX1A. This chain is Syntaphilin, found in Mus musculus (Mouse).